The following is a 111-amino-acid chain: T cell receptor beta variable 30 (111 aa).

The N-terminal stretch at 1-18 (MLCSLLALLLGTFFGVRS) is a signal peptide. In terms of domain architecture, Ig-like spans 19 to 111 (QTIHQWPATL…DSGFYLCAWS (93 aa)). A disulfide bond links Cys40 and Cys108. Asn80 is a glycosylation site (N-linked (GlcNAc...) asparagine).

In terms of assembly, alpha-beta TR is a heterodimer composed of an alpha and beta chain; disulfide-linked. The alpha-beta TR is associated with the transmembrane signaling CD3 coreceptor proteins to form the TR-CD3 (TcR or TCR). The assembly of alpha-beta TR heterodimers with CD3 occurs in the endoplasmic reticulum where a single alpha-beta TR heterodimer associates with one CD3D-CD3E heterodimer, one CD3G-CD3E heterodimer and one CD247 homodimer forming a stable octameric structure. CD3D-CD3E and CD3G-CD3E heterodimers preferentially associate with TR alpha and TR beta chains, respectively. The association of the CD247 homodimer is the last step of TcR assembly in the endoplasmic reticulum and is required for transport to the cell surface.

Its subcellular location is the cell membrane. In terms of biological role, v region of the variable domain of T cell receptor (TR) beta chain that participates in the antigen recognition. Alpha-beta T cell receptors are antigen specific receptors which are essential to the immune response and are present on the cell surface of T lymphocytes. Recognize peptide-major histocompatibility (MH) (pMH) complexes that are displayed by antigen presenting cells (APC), a prerequisite for efficient T cell adaptive immunity against pathogens. Binding of alpha-beta TR to pMH complex initiates TR-CD3 clustering on the cell surface and intracellular activation of LCK that phosphorylates the ITAM motifs of CD3G, CD3D, CD3E and CD247 enabling the recruitment of ZAP70. In turn ZAP70 phosphorylates LAT, which recruits numerous signaling molecules to form the LAT signalosome. The LAT signalosome propagates signal branching to three major signaling pathways, the calcium, the mitogen-activated protein kinase (MAPK) kinase and the nuclear factor NF-kappa-B (NF-kB) pathways, leading to the mobilization of transcription factors that are critical for gene expression and essential for T cell growth and differentiation. The T cell repertoire is generated in the thymus, by V-(D)-J rearrangement. This repertoire is then shaped by intrathymic selection events to generate a peripheral T cell pool of self-MH restricted, non-autoaggressive T cells. Post-thymic interaction of alpha-beta TR with the pMH complexes shapes TR structural and functional avidity. This Homo sapiens (Human) protein is T cell receptor beta variable 30.